The chain runs to 248 residues: 2,3-bisphosphoglycerate-dependent phosphoglycerate mutase (248 aa).

Residues 8–15 (RHGESTWN), 21–22 (TG), R60, 87–90 (ERHY), K98, 114–115 (RR), and 183–184 (GN) each bind substrate. H9 functions as the Tele-phosphohistidine intermediate in the catalytic mechanism. The active-site Proton donor/acceptor is E87.

It belongs to the phosphoglycerate mutase family. BPG-dependent PGAM subfamily. As to quaternary structure, homodimer.

It carries out the reaction (2R)-2-phosphoglycerate = (2R)-3-phosphoglycerate. It participates in carbohydrate degradation; glycolysis; pyruvate from D-glyceraldehyde 3-phosphate: step 3/5. Its function is as follows. Catalyzes the interconversion of 2-phosphoglycerate and 3-phosphoglycerate. This chain is 2,3-bisphosphoglycerate-dependent phosphoglycerate mutase, found in Paraburkholderia phytofirmans (strain DSM 17436 / LMG 22146 / PsJN) (Burkholderia phytofirmans).